The sequence spans 412 residues: Poly-beta-1,6-N-acetyl-D-glucosamine synthase (412 aa).

4 helical membrane-spanning segments follow: residues 6–26 (FLLFYPVFMSIYWIVGSIYFY), 298–318 (IISILWVYIVLLYLGYLFITA), 332–352 (IFLLSSFTMTFINVIQFTVAL), and 366–386 (LIFVSWYPTVYWIINAAVVLV).

The protein belongs to the glycosyltransferase 2 family.

Its subcellular location is the cell membrane. Functionally, N-acetylglucosaminyltransferase that catalyzes the polymerization of single monomer units of UDP-N-acetylglucosamine to produce the linear homomer poly-beta-1,6-N-acetyl-D-glucosamine (PNAG, also referred to as PIA), a biofilm adhesin polysaccharide. Requires IcaD for full activity. This chain is Poly-beta-1,6-N-acetyl-D-glucosamine synthase (icaA), found in Staphylococcus aureus (strain NCTC 8325 / PS 47).